The primary structure comprises 286 residues: ATP synthase gamma chain (286 aa).

Belongs to the ATPase gamma chain family. In terms of assembly, F-type ATPases have 2 components, CF(1) - the catalytic core - and CF(0) - the membrane proton channel. CF(1) has five subunits: alpha(3), beta(3), gamma(1), delta(1), epsilon(1). CF(0) has three main subunits: a, b and c.

The protein localises to the cell inner membrane. Functionally, produces ATP from ADP in the presence of a proton gradient across the membrane. The gamma chain is believed to be important in regulating ATPase activity and the flow of protons through the CF(0) complex. This is ATP synthase gamma chain from Pseudomonas entomophila (strain L48).